The following is a 297-amino-acid chain: Succinate dehydrogenase [ubiquinone] iron-sulfur subunit, mitochondrial (297 aa).

Positions 47-140 (KKFEIYRWNP…SLKVYPLPHM (94 aa)) constitute a 2Fe-2S ferredoxin-type domain. Residues C100, C105, C108, and C120 each contribute to the [2Fe-2S] cluster site. The 4Fe-4S ferredoxin-type domain occupies 185–215 (DRSKLDGLYECILCACCSTSCPSYWWNAEKY). [4Fe-4S] cluster contacts are provided by C195, C198, and C201. C205 is a binding site for [3Fe-4S] cluster. W210 contributes to the a ubiquinone binding site. [3Fe-4S] cluster-binding residues include C252 and C258. C262 contacts [4Fe-4S] cluster.

The protein belongs to the succinate dehydrogenase/fumarate reductase iron-sulfur protein family. In terms of assembly, component of complex II composed of four subunits: a flavoprotein (FP), an iron-sulfur protein (IP), and a cytochrome b composed of a large and a small subunit. [2Fe-2S] cluster serves as cofactor. The cofactor is [3Fe-4S] cluster. [4Fe-4S] cluster is required as a cofactor. As to expression, most abundant in the adult thorax and low in abdominal tissues.

It localises to the mitochondrion inner membrane. The enzyme catalyses a quinone + succinate = fumarate + a quinol. It functions in the pathway carbohydrate metabolism; tricarboxylic acid cycle; fumarate from succinate (eukaryal route): step 1/1. Iron-sulfur protein (IP) subunit of succinate dehydrogenase (SDH) that is involved in complex II of the mitochondrial electron transport chain and is responsible for transferring electrons from succinate to ubiquinone (coenzyme Q). This Drosophila melanogaster (Fruit fly) protein is Succinate dehydrogenase [ubiquinone] iron-sulfur subunit, mitochondrial (SdhB).